The chain runs to 126 residues: Holo-[acyl-carrier-protein] synthase (126 aa).

Residues Asp-8 and Glu-59 each coordinate Mg(2+).

Belongs to the P-Pant transferase superfamily. AcpS family. Mg(2+) is required as a cofactor.

Its subcellular location is the cytoplasm. The enzyme catalyses apo-[ACP] + CoA = holo-[ACP] + adenosine 3',5'-bisphosphate + H(+). Its function is as follows. Transfers the 4'-phosphopantetheine moiety from coenzyme A to a Ser of acyl-carrier-protein. This is Holo-[acyl-carrier-protein] synthase from Rickettsia prowazekii (strain Madrid E).